We begin with the raw amino-acid sequence, 237 residues long: Protein GrpE (237 aa).

Disordered regions lie at residues 24 to 56 (LILEDSEAEAGTSSGETAAEPSPDPGEALKQLQ) and 204 to 237 (SAGSPSSEPSPPAQATIEAGPENTPASPQNPQPS).

Belongs to the GrpE family. In terms of assembly, homodimer.

Its subcellular location is the cytoplasm. Participates actively in the response to hyperosmotic and heat shock by preventing the aggregation of stress-denatured proteins, in association with DnaK and GrpE. It is the nucleotide exchange factor for DnaK and may function as a thermosensor. Unfolded proteins bind initially to DnaJ; upon interaction with the DnaJ-bound protein, DnaK hydrolyzes its bound ATP, resulting in the formation of a stable complex. GrpE releases ADP from DnaK; ATP binding to DnaK triggers the release of the substrate protein, thus completing the reaction cycle. Several rounds of ATP-dependent interactions between DnaJ, DnaK and GrpE are required for fully efficient folding. The protein is Protein GrpE of Synechococcus sp. (strain JA-2-3B'a(2-13)) (Cyanobacteria bacterium Yellowstone B-Prime).